Here is a 210-residue protein sequence, read N- to C-terminus: Redox-sensing transcriptional repressor Rex (210 aa).

The segment at residues 17–56 is a DNA-binding region (H-T-H motif); sequence SYLHLVKKAEADKLEYISGTVIAEELELEPIQVRKDLTIT. NAD(+) is bound at residue 91–96; sequence GAGSLG.

The protein belongs to the transcriptional regulatory Rex family. As to quaternary structure, homodimer.

It localises to the cytoplasm. Its function is as follows. Modulates transcription in response to changes in cellular NADH/NAD(+) redox state. In Treponema denticola (strain ATCC 35405 / DSM 14222 / CIP 103919 / JCM 8153 / KCTC 15104), this protein is Redox-sensing transcriptional repressor Rex.